The primary structure comprises 1289 residues: DNA-directed RNA polymerase subunit beta (1289 aa).

Belongs to the RNA polymerase beta chain family. In terms of assembly, the RNAP catalytic core consists of 2 alpha, 1 beta, 1 beta' and 1 omega subunit. When a sigma factor is associated with the core the holoenzyme is formed, which can initiate transcription.

It carries out the reaction RNA(n) + a ribonucleoside 5'-triphosphate = RNA(n+1) + diphosphate. In terms of biological role, DNA-dependent RNA polymerase catalyzes the transcription of DNA into RNA using the four ribonucleoside triphosphates as substrates. The chain is DNA-directed RNA polymerase subunit beta from Methylacidiphilum infernorum (isolate V4) (Methylokorus infernorum (strain V4)).